Reading from the N-terminus, the 411-residue chain is Probable 26S proteasome regulatory subunit rpn-6.2 (411 aa).

The region spanning 212–381 (YKTSFSYFYE…DTVVIYPKAG (170 aa)) is the PCI domain.

The protein belongs to the proteasome subunit S9 family. As to quaternary structure, component of the lid subcomplex of the 19S proteasome regulatory particle complex (also named PA700 complex). The 26S proteasome consists of a 20S proteasome core and two 19S regulatory subunits.

In terms of biological role, component of the lid subcomplex of the 26S proteasome, a multiprotein complex involved in the ATP-dependent degradation of ubiquitinated proteins. In the complex, rpn-6.2 is required for proteasome assembly. The polypeptide is Probable 26S proteasome regulatory subunit rpn-6.2 (Caenorhabditis briggsae).